The primary structure comprises 811 residues: Leucine--tRNA ligase (811 aa).

The 'HIGH' region signature appears at 40–50; it reads PYPSGRLHMGH. Positions 579–583 match the 'KMSKS' region motif; that stretch reads KMSKS. Position 582 (Lys582) interacts with ATP.

It belongs to the class-I aminoacyl-tRNA synthetase family.

It localises to the cytoplasm. The enzyme catalyses tRNA(Leu) + L-leucine + ATP = L-leucyl-tRNA(Leu) + AMP + diphosphate. This chain is Leucine--tRNA ligase, found in Campylobacter fetus subsp. fetus (strain 82-40).